Here is a 253-residue protein sequence, read N- to C-terminus: 5'/3'-nucleotidase SurE (253 aa).

D8, D9, S39, and N92 together coordinate a divalent metal cation.

It belongs to the SurE nucleotidase family. The cofactor is a divalent metal cation.

The protein resides in the cytoplasm. The enzyme catalyses a ribonucleoside 5'-phosphate + H2O = a ribonucleoside + phosphate. It catalyses the reaction a ribonucleoside 3'-phosphate + H2O = a ribonucleoside + phosphate. It carries out the reaction [phosphate](n) + H2O = [phosphate](n-1) + phosphate + H(+). Functionally, nucleotidase with a broad substrate specificity as it can dephosphorylate various ribo- and deoxyribonucleoside 5'-monophosphates and ribonucleoside 3'-monophosphates with highest affinity to 3'-AMP. Also hydrolyzes polyphosphate (exopolyphosphatase activity) with the preference for short-chain-length substrates (P20-25). Might be involved in the regulation of dNTP and NTP pools, and in the turnover of 3'-mononucleotides produced by numerous intracellular RNases (T1, T2, and F) during the degradation of various RNAs. This Erwinia tasmaniensis (strain DSM 17950 / CFBP 7177 / CIP 109463 / NCPPB 4357 / Et1/99) protein is 5'/3'-nucleotidase SurE.